Reading from the N-terminus, the 154-residue chain is Ribonuclease P protein component (154 aa).

This sequence belongs to the RnpA family. In terms of assembly, consists of a catalytic RNA component (M1 or rnpB) and a protein subunit.

The catalysed reaction is Endonucleolytic cleavage of RNA, removing 5'-extranucleotides from tRNA precursor.. RNaseP catalyzes the removal of the 5'-leader sequence from pre-tRNA to produce the mature 5'-terminus. It can also cleave other RNA substrates such as 4.5S RNA. The protein component plays an auxiliary but essential role in vivo by binding to the 5'-leader sequence and broadening the substrate specificity of the ribozyme. This Chlorobaculum tepidum (strain ATCC 49652 / DSM 12025 / NBRC 103806 / TLS) (Chlorobium tepidum) protein is Ribonuclease P protein component.